Consider the following 1133-residue polypeptide: DNA-directed RNA polymerase subunit beta (1133 aa).

The disordered stretch occupies residues 1085–1133; the sequence is ADVSSRHTPSRPTYESVTSEDLSPAAGGTFTLARRSREEDEDREEEDDF. A compositionally biased stretch (polar residues) spans 1090-1105; the sequence is RHTPSRPTYESVTSED. The segment covering 1123-1133 has biased composition (acidic residues); that stretch reads EDEDREEEDDF.

This sequence belongs to the RNA polymerase beta chain family. In terms of assembly, in cyanobacteria the RNAP catalytic core is composed of 2 alpha, 1 beta, 1 beta', 1 gamma and 1 omega subunit. When a sigma factor is associated with the core the holoenzyme is formed, which can initiate transcription.

The catalysed reaction is RNA(n) + a ribonucleoside 5'-triphosphate = RNA(n+1) + diphosphate. In terms of biological role, DNA-dependent RNA polymerase catalyzes the transcription of DNA into RNA using the four ribonucleoside triphosphates as substrates. This is DNA-directed RNA polymerase subunit beta from Synechococcus sp. (strain JA-3-3Ab) (Cyanobacteria bacterium Yellowstone A-Prime).